The following is a 353-amino-acid chain: UPF0283 membrane protein YcjF (353 aa).

The span at 1-19 (MSEPLKPRIDFAEPLKEEP) shows a compositional bias: basic and acidic residues. Residues 1–35 (MSEPLKPRIDFAEPLKEEPTSAFKAQQTFSEAESR) are disordered. 3 consecutive transmembrane segments (helical) span residues 70 to 90 (MVMG…VQWT), 100 to 120 (VALG…GSVV), and 213 to 233 (ESTL…FIAW).

The protein belongs to the UPF0283 family.

The protein resides in the cell inner membrane. The polypeptide is UPF0283 membrane protein YcjF (Salmonella gallinarum (strain 287/91 / NCTC 13346)).